A 90-amino-acid chain; its full sequence is DNA-binding protein HRm (90 aa).

The protein belongs to the bacterial histone-like protein family.

Functionally, histone-like DNA-binding protein which is capable of wrapping DNA to stabilize it, and thus to prevent its denaturation under extreme environmental conditions. The sequence is that of DNA-binding protein HRm (hupB) from Rhizobium meliloti (strain 1021) (Ensifer meliloti).